The primary structure comprises 144 residues: Large ribosomal subunit protein uL16 (144 aa).

Belongs to the universal ribosomal protein uL16 family. Part of the 50S ribosomal subunit.

Binds 23S rRNA and is also seen to make contacts with the A and possibly P site tRNAs. The sequence is that of Large ribosomal subunit protein uL16 from Novosphingobium aromaticivorans (strain ATCC 700278 / DSM 12444 / CCUG 56034 / CIP 105152 / NBRC 16084 / F199).